The primary structure comprises 413 residues: Tyrosine--tRNA ligase (413 aa).

L-tyrosine is bound at residue Tyr-34. Residues 39 to 48 (CTAQSLHVGN) carry the 'HIGH' region motif. The L-tyrosine site is built by Tyr-171 and Gln-175. Positions 231–235 (KMGKT) match the 'KMSKS' region motif. Lys-234 contacts ATP. The region spanning 346 to 411 (IPITELLVTI…GKKCHILVKI (66 aa)) is the S4 RNA-binding domain.

It belongs to the class-I aminoacyl-tRNA synthetase family. TyrS type 1 subfamily. Homodimer.

Its subcellular location is the cytoplasm. It catalyses the reaction tRNA(Tyr) + L-tyrosine + ATP = L-tyrosyl-tRNA(Tyr) + AMP + diphosphate + H(+). Its function is as follows. Catalyzes the attachment of tyrosine to tRNA(Tyr) in a two-step reaction: tyrosine is first activated by ATP to form Tyr-AMP and then transferred to the acceptor end of tRNA(Tyr). This Orientia tsutsugamushi (strain Ikeda) (Rickettsia tsutsugamushi) protein is Tyrosine--tRNA ligase.